Here is a 466-residue protein sequence, read N- to C-terminus: Asparagine--tRNA ligase (466 aa).

Belongs to the class-II aminoacyl-tRNA synthetase family. As to quaternary structure, homodimer.

It is found in the cytoplasm. It catalyses the reaction tRNA(Asn) + L-asparagine + ATP = L-asparaginyl-tRNA(Asn) + AMP + diphosphate + H(+). In Enterobacter sp. (strain 638), this protein is Asparagine--tRNA ligase.